The chain runs to 609 residues: Aminopeptidase ltah-1.1 (609 aa).

Substrate contacts are provided by residues 137-139 and 268-273; these read QCQ and PFGGME. His-297 serves as a coordination point for Zn(2+). The Proton acceptor role is filled by Glu-298. His-301 and Glu-320 together coordinate Zn(2+). Tyr-387 (proton donor) is an active-site residue. Substrate is bound at residue 564–566; sequence RMK.

This sequence belongs to the peptidase M1 family. Zn(2+) is required as a cofactor.

The protein resides in the cytoplasm. The catalysed reaction is Release of N-terminal Arg and Lys from oligopeptides when P1' is not Pro. Also acts on arylamides of Arg and Lys.. Functionally, aminopeptidase which preferentially removes N-terminal Arg and Lys residues from peptides and proteins. This is Aminopeptidase ltah-1.1 from Caenorhabditis elegans.